Reading from the N-terminus, the 625-residue chain is Voltage-gated potassium channel KCNC4 (625 aa).

Disordered regions lie at residues 1–24 (MISS…SKTC) and 65–86 (LADP…SSGS). The inactivation gate stretch occupies residues 1-28 (MISSVCVSSYRGRKSGNKPPSKTCLKEE). At 1 to 227 (MISSVCVSSY…EDPYSSRAAR (227 aa)) the chain is on the cytoplasmic side. Residues serine 8, serine 9, serine 15, and serine 21 each carry the phosphoserine modification. Residues 77–86 (DGGGAGSSGS) show a composition bias toward gly residues. Zn(2+) is bound by residues histidine 117, cysteine 123, cysteine 144, and cysteine 145. The chain crosses the membrane as a helical span at residues 228 to 248 (VVAFASLFFILVSITTFCLET). Asparagine 257 and asparagine 266 each carry an N-linked (GlcNAc...) asparagine glycan. The chain crosses the membrane as a helical span at residues 279–299 (EPILTYIEGVCVMWFTLEFLV). The Cytoplasmic segment spans residues 300 to 313 (RIVCCPDTLDFVKN). The chain crosses the membrane as a helical span at residues 314 to 334 (LLNIIDFVAILPFYLEVGLSG). The chain crosses the membrane as a helical; Voltage-sensor span at residues 346–365 (FLRVVRFVRILRIFKLTRHF). Residues 366–381 (VGLRVLGHTLRASTNE) are Cytoplasmic-facing. A helical transmembrane segment spans residues 382–402 (FLLLIIFLALGVLIFATMIYY). K(+)-binding residues include threonine 437, leucine 438, glycine 439, and tyrosine 440. The short motif at 437–442 (TLGYGD) is the Selectivity filter element. A helical membrane pass occupies residues 453–473 (VGALCALAGVLTIAMPVPVIV). Residues 474–625 (NNFGMYYSLA…CVPVSHTCAL (152 aa)) lie on the Cytoplasmic side of the membrane. Residues 490–581 (PKKRKKHVPR…RRALRRSGTR (92 aa)) form a disordered region. Residues 528-543 (AREEGMVERKRADSKQ) are compositionally biased toward basic and acidic residues.

The protein belongs to the potassium channel family. C (Shaw) (TC 1.A.1.2) subfamily. Kv3.4/KCNC4 sub-subfamily. Homotetramer. Heterotetramer of potassium channel proteins. In terms of processing, phosphorylation of serine residues in the inactivation gate inhibits rapid channel closure.

Its subcellular location is the membrane. It carries out the reaction K(+)(in) = K(+)(out). Voltage-gated potassium channel that opens in response to the voltage difference across the membrane, forming a potassium-selective channel through which potassium ions pass in accordance with their electrochemical gradient. The channel displays rapid activation and inactivation kinetics. This Rattus norvegicus (Rat) protein is Voltage-gated potassium channel KCNC4.